A 187-amino-acid polypeptide reads, in one-letter code: UPF0301 protein lpl0620 (187 aa).

Belongs to the UPF0301 (AlgH) family.

This chain is UPF0301 protein lpl0620, found in Legionella pneumophila (strain Lens).